Reading from the N-terminus, the 386-residue chain is MKTVILALALIVLASSTQADVIATIKKIDQSPFGRTLFDTIYLELQTGDPLDRLLSTLTDLEDRYVAEQKEDDAKNQEYQGACTVDISAFDKDLAESNRKKIELEARLEGQLYPQRSILEGLVAQKKAEVKGYQKDLDELDAQRAEEHEDFEEKVLEHQEATAIIAEARRLFADNIEHGSFIQKGKATKQTHKFTKEVASMIQKHFTTSAKKTAKFQHRKGYSKLFKAFATIASKVEQLADAGAVQKIIDLADELLAKIADSLSLLRFAEDKRVEAYKKSRNFIVISLNVAGSALANATSDLASLNDIIAQVEASLDTTEQRIENVSADRHDRFTQCEEAVQDYQDARAARTSDRDVVSQTIGLVNKELRTLREQLALRQQAGEEI.

Positions 1–19 (MKTVILALALIVLASSTQA) are cleaved as a signal peptide. Residues 20-48 (DVIATIKKIDQSPFGRTLFDTIYLELQTG) constitute a propeptide that is removed on maturation. Residues 51–154 (LDRLLSTLTD…AEEHEDFEEK (104 aa)) are a coiled coil. The propeptide occupies 184 to 238 (KGKATKQTHKFTKEVASMIQKHFTTSAKKTAKFQHRKGYSKLFKAFATIASKVEQ). Residues 293 to 332 (SALANATSDLASLNDIIAQVEASLDTTEQRIENVSADRHD) adopt a coiled-coil conformation.

The protein belongs to the TMP family.

Its subcellular location is the trichocyst. In terms of biological role, structural protein that crystallize inside the trichocyst matrix. This chain is Trichocyst matrix protein T2-A (T2A), found in Paramecium tetraurelia.